The chain runs to 621 residues: 1-deoxy-D-xylulose-5-phosphate synthase (621 aa).

Thiamine diphosphate-binding positions include H80 and 121 to 123 (GHS). Position 152 (D152) interacts with Mg(2+). Thiamine diphosphate-binding positions include 153–154 (GA), N181, Y288, and E370. N181 serves as a coordination point for Mg(2+).

It belongs to the transketolase family. DXPS subfamily. In terms of assembly, homodimer. It depends on Mg(2+) as a cofactor. The cofactor is thiamine diphosphate.

It carries out the reaction D-glyceraldehyde 3-phosphate + pyruvate + H(+) = 1-deoxy-D-xylulose 5-phosphate + CO2. The protein operates within metabolic intermediate biosynthesis; 1-deoxy-D-xylulose 5-phosphate biosynthesis; 1-deoxy-D-xylulose 5-phosphate from D-glyceraldehyde 3-phosphate and pyruvate: step 1/1. Its function is as follows. Catalyzes the acyloin condensation reaction between C atoms 2 and 3 of pyruvate and glyceraldehyde 3-phosphate to yield 1-deoxy-D-xylulose-5-phosphate (DXP). In Vibrio parahaemolyticus serotype O3:K6 (strain RIMD 2210633), this protein is 1-deoxy-D-xylulose-5-phosphate synthase.